Here is a 272-residue protein sequence, read N- to C-terminus: Sulfate transporter CysZ (272 aa).

4 consecutive transmembrane segments (helical) span residues F29–I49, W66–F86, I148–L168, and F219–W239.

The protein belongs to the CysZ family.

Its subcellular location is the cell inner membrane. In terms of biological role, high affinity, high specificity proton-dependent sulfate transporter, which mediates sulfate uptake. Provides the sulfur source for the cysteine synthesis pathway. The chain is Sulfate transporter CysZ from Haemophilus influenzae (strain PittGG).